The primary structure comprises 98 residues: uncharacterized protein (98 aa).

The tract at residues 58–98 is disordered; the sequence is ARFPVEDTAGGLLRTGGHRPQISDEEVSKRHHEQSHGQEDH.

This is an uncharacterized protein from Saccharomyces cerevisiae (strain ATCC 204508 / S288c) (Baker's yeast).